The primary structure comprises 207 residues: Large ribosomal subunit protein uL4 (207 aa).

The tract at residues 57–78 (VAGGGKKPWRQKGTGRARHGSI) is disordered. The segment covering 63 to 77 (KPWRQKGTGRARHGS) has biased composition (basic residues).

Belongs to the universal ribosomal protein uL4 family. As to quaternary structure, part of the 50S ribosomal subunit.

One of the primary rRNA binding proteins, this protein initially binds near the 5'-end of the 23S rRNA. It is important during the early stages of 50S assembly. It makes multiple contacts with different domains of the 23S rRNA in the assembled 50S subunit and ribosome. Functionally, forms part of the polypeptide exit tunnel. The sequence is that of Large ribosomal subunit protein uL4 from Onion yellows phytoplasma (strain OY-M).